The primary structure comprises 156 residues: Small ribosomal subunit protein uS7 (156 aa).

The protein belongs to the universal ribosomal protein uS7 family. Part of the 30S ribosomal subunit. Contacts proteins S9 and S11.

In terms of biological role, one of the primary rRNA binding proteins, it binds directly to 16S rRNA where it nucleates assembly of the head domain of the 30S subunit. Is located at the subunit interface close to the decoding center, probably blocks exit of the E-site tRNA. The protein is Small ribosomal subunit protein uS7 of Treponema pallidum (strain Nichols).